Reading from the N-terminus, the 304-residue chain is UDP-N-acetylenolpyruvoylglucosamine reductase (304 aa).

An FAD-binding PCMH-type domain is found at 33–198 (RVGGPADILV…IEATVELESG (166 aa)). R177 is an active-site residue. The active-site Proton donor is S227. The active site involves E297.

It belongs to the MurB family. The cofactor is FAD.

It localises to the cytoplasm. The enzyme catalyses UDP-N-acetyl-alpha-D-muramate + NADP(+) = UDP-N-acetyl-3-O-(1-carboxyvinyl)-alpha-D-glucosamine + NADPH + H(+). The protein operates within cell wall biogenesis; peptidoglycan biosynthesis. Functionally, cell wall formation. The polypeptide is UDP-N-acetylenolpyruvoylglucosamine reductase (Clostridium perfringens (strain ATCC 13124 / DSM 756 / JCM 1290 / NCIMB 6125 / NCTC 8237 / Type A)).